The following is a 197-amino-acid chain: Small ribosomal subunit protein eS1 (197 aa).

The protein belongs to the eukaryotic ribosomal protein eS1 family.

The chain is Small ribosomal subunit protein eS1 from Methanoculleus marisnigri (strain ATCC 35101 / DSM 1498 / JR1).